A 1402-amino-acid chain; its full sequence is Transcription elongation factor spt-6 (1402 aa).

The segment at 1–199 is disordered; sequence MSNSMRDLID…PKDRGLNIDT (199 aa). 4 stretches are compositionally biased toward acidic residues: residues 10 to 28, 40 to 52, 62 to 75, and 90 to 102; these read DGEA…DEEA, DSSE…EDEE, IVDE…EDSD, and EEEE…DLDL. A compositionally biased stretch (basic and acidic residues) spans 123-135; that stretch reads HRDDHRPTERRGL. Positions 161–176 are enriched in acidic residues; that stretch reads DEFDDFIEDDYPEDDE. Over residues 177–199 the composition is skewed to basic and acidic residues; the sequence is ERRHREEDEEVARPKDRGLNIDT. The 68-residue stretch at 1094-1161 folds into the S1 motif domain; that stretch reads GMIVAANVRV…KEFVSKLSMR (68 aa). In terms of domain architecture, SH2 spans 1209-1306; sequence PLFKPFNSTQ…KKVDELMQCD (98 aa).

Belongs to the SPT6 family.

Its subcellular location is the nucleus. It is found in the chromosome. Functionally, histone H3-H4 chaperone that plays a role in maintenance of chromatin structure during RNA polymerase II transcription elongation thereby repressing transcription initiation from cryptic promoters. Mediates the reassembly of nucleosomes onto the promoters of at least a selected set of genes during repression; the nucleosome reassembly is essential for transcriptional repression. Essential for viability. In Neurospora crassa (strain ATCC 24698 / 74-OR23-1A / CBS 708.71 / DSM 1257 / FGSC 987), this protein is Transcription elongation factor spt-6 (spt-6).